A 103-amino-acid polypeptide reads, in one-letter code: Heme-copper oxidase subunit 4 (103 aa).

Helical transmembrane passes span valine 20 to alanine 40, asparagine 42 to phenylalanine 62, and isoleucine 75 to leucine 95.

It localises to the cell membrane. The polypeptide is Heme-copper oxidase subunit 4 (aoxC) (Aeropyrum pernix (strain ATCC 700893 / DSM 11879 / JCM 9820 / NBRC 100138 / K1)).